The chain runs to 950 residues: Bifunctional glutamine synthetase adenylyltransferase/adenylyl-removing enzyme (950 aa).

Residues 1 to 443 (MSLPSPLIPV…VFVTLIGDEE (443 aa)) are adenylyl removase. The segment at 450–950 (ERHFNELWDM…WQEWLESSTI (501 aa)) is adenylyl transferase.

This sequence belongs to the GlnE family. It depends on Mg(2+) as a cofactor.

It catalyses the reaction [glutamine synthetase]-O(4)-(5'-adenylyl)-L-tyrosine + phosphate = [glutamine synthetase]-L-tyrosine + ADP. The enzyme catalyses [glutamine synthetase]-L-tyrosine + ATP = [glutamine synthetase]-O(4)-(5'-adenylyl)-L-tyrosine + diphosphate. Its function is as follows. Involved in the regulation of glutamine synthetase GlnA, a key enzyme in the process to assimilate ammonia. When cellular nitrogen levels are high, the C-terminal adenylyl transferase (AT) inactivates GlnA by covalent transfer of an adenylyl group from ATP to specific tyrosine residue of GlnA, thus reducing its activity. Conversely, when nitrogen levels are low, the N-terminal adenylyl removase (AR) activates GlnA by removing the adenylyl group by phosphorolysis, increasing its activity. The regulatory region of GlnE binds the signal transduction protein PII (GlnB) which indicates the nitrogen status of the cell. The protein is Bifunctional glutamine synthetase adenylyltransferase/adenylyl-removing enzyme of Vibrio vulnificus (strain CMCP6).